The primary structure comprises 59 residues: Mu-conotoxin SrVA (59 aa).

Positions 1–22 (MRCLPVFVILLLLIASAPSVDA) are cleaved as a signal peptide. The propeptide occupies 23-44 (QLKTKDDVPLASFHDNAKGTQH). 2 cysteine pairs are disulfide-bonded: Cys-51–Cys-58 and Cys-52–Cys-59.

The protein belongs to the conotoxin T superfamily. Expressed by the venom duct.

The protein resides in the secreted. In terms of biological role, mu-conotoxins block voltage-gated sodium channels. This peptide inhibits the cardiac sodium channel hNav1.5/SCN5A (33% inhibition at 200 nM, 50% at 400 nM, and 55% at 600 nM). Does not interfere with the voltage-dependence of activation, but affects the voltage-dependence of inactivation of hNav1.5. In vivo, intracranial injection into 9-day-old mice causes transient symptoms, including extension of the body and clockwise and counter-clockwise turns, that last 3 to 4 minutes. Intracranial injection into 16-day-old mice, causes transient symptoms, including agitated breathing and occasional turning followed by scratching and grooming behavior, that last for 15-19 minutes. The sequence is that of Mu-conotoxin SrVA from Conus spurius (Alphabet cone).